Reading from the N-terminus, the 89-residue chain is Small ribosomal subunit protein uS14A (89 aa).

Belongs to the universal ribosomal protein uS14 family. As to quaternary structure, part of the 30S ribosomal subunit. Contacts proteins S3 and S10.

Its function is as follows. Binds 16S rRNA, required for the assembly of 30S particles and may also be responsible for determining the conformation of the 16S rRNA at the A site. The protein is Small ribosomal subunit protein uS14A of Lacticaseibacillus paracasei (strain ATCC 334 / BCRC 17002 / CCUG 31169 / CIP 107868 / KCTC 3260 / NRRL B-441) (Lactobacillus paracasei).